The chain runs to 175 residues: MAVRIRLSKRGRRKLALYDIVVSDSRSPRDGKFIQKLGTYNPNTNPATVVLNDELTFDWVMKGALPTDTARTILSERGVMLKKHLQVGVDKGAITQEVADQKFSAWVSNKEASKTSNANALVSKKEADRKARLAAEVKIKEAKAEQVRAKKIVAENPVAAADLAEATDAPAEAAE.

It belongs to the bacterial ribosomal protein bS16 family.

In Cytophaga hutchinsonii (strain ATCC 33406 / DSM 1761 / CIP 103989 / NBRC 15051 / NCIMB 9469 / D465), this protein is Small ribosomal subunit protein bS16.